Consider the following 189-residue polypeptide: Elongation factor P (189 aa).

Belongs to the elongation factor P family.

The protein resides in the cytoplasm. It participates in protein biosynthesis; polypeptide chain elongation. Functionally, involved in peptide bond synthesis. Stimulates efficient translation and peptide-bond synthesis on native or reconstituted 70S ribosomes in vitro. Probably functions indirectly by altering the affinity of the ribosome for aminoacyl-tRNA, thus increasing their reactivity as acceptors for peptidyl transferase. The chain is Elongation factor P from Rhizobium meliloti (strain 1021) (Ensifer meliloti).